We begin with the raw amino-acid sequence, 427 residues long: Histidinol dehydrogenase (427 aa).

Tyrosine 125, glutamine 186, and asparagine 209 together coordinate NAD(+). Substrate is bound by residues serine 234, glutamine 256, and histidine 259. Zn(2+) contacts are provided by glutamine 256 and histidine 259. Active-site proton acceptor residues include glutamate 325 and histidine 326. Substrate is bound by residues histidine 326, aspartate 359, glutamate 413, and histidine 419. Position 359 (aspartate 359) interacts with Zn(2+). Histidine 419 contacts Zn(2+).

It belongs to the histidinol dehydrogenase family. Zn(2+) serves as cofactor.

The catalysed reaction is L-histidinol + 2 NAD(+) + H2O = L-histidine + 2 NADH + 3 H(+). Its pathway is amino-acid biosynthesis; L-histidine biosynthesis; L-histidine from 5-phospho-alpha-D-ribose 1-diphosphate: step 9/9. Catalyzes the sequential NAD-dependent oxidations of L-histidinol to L-histidinaldehyde and then to L-histidine. The polypeptide is Histidinol dehydrogenase (Leptospira interrogans serogroup Icterohaemorrhagiae serovar Lai (strain 56601)).